A 519-amino-acid polypeptide reads, in one-letter code: Nitrogen fixation regulatory protein (519 aa).

In terms of domain architecture, PAS 1 spans 23–93; that stretch reads LPEIFRQTVE…QALWGRLAQK (71 aa). The PAC domain occupies 94-148; sequence KPWSGVLVNRRKDKTLYLAELTVAPVLNEAGETIYYLGMHRDTSELHELEQRVNN. The PAS 2 domain occupies 151 to 217; that stretch reads LMIEAVVNAA…FETLENQGSA (67 aa). A Histidine kinase domain is found at 302–517; the sequence is AAIHRLQGPV…RIVVELPFSA (216 aa). Histidine 305 bears the Phosphohistidine; by autocatalysis mark.

FAD is required as a cofactor.

It catalyses the reaction ATP + protein L-histidine = ADP + protein N-phospho-L-histidine.. In terms of biological role, required for the inhibition of NifA activity in response to oxygen and low level of fixed nitrogen. In Azotobacter vinelandii, this protein is Nitrogen fixation regulatory protein (nifL).